We begin with the raw amino-acid sequence, 421 residues long: Glutamate dehydrogenase (421 aa).

The active site involves K105. 220–226 contributes to the NAD(+) binding site; it reads GYGNAGY.

The protein belongs to the Glu/Leu/Phe/Val dehydrogenases family. Homohexamer.

The protein localises to the cytoplasm. The protein resides in the chromosome. It catalyses the reaction L-glutamate + NAD(+) + H2O = 2-oxoglutarate + NH4(+) + NADH + H(+). The catalysed reaction is L-glutamate + NADP(+) + H2O = 2-oxoglutarate + NH4(+) + NADPH + H(+). This Thermococcus kodakarensis (strain ATCC BAA-918 / JCM 12380 / KOD1) (Pyrococcus kodakaraensis (strain KOD1)) protein is Glutamate dehydrogenase (gdhA).